The sequence spans 252 residues: Imidazole glycerol phosphate synthase subunit HisF (252 aa).

Active-site residues include aspartate 12 and aspartate 131.

It belongs to the HisA/HisF family. In terms of assembly, heterodimer of HisH and HisF.

The protein resides in the cytoplasm. The enzyme catalyses 5-[(5-phospho-1-deoxy-D-ribulos-1-ylimino)methylamino]-1-(5-phospho-beta-D-ribosyl)imidazole-4-carboxamide + L-glutamine = D-erythro-1-(imidazol-4-yl)glycerol 3-phosphate + 5-amino-1-(5-phospho-beta-D-ribosyl)imidazole-4-carboxamide + L-glutamate + H(+). Its pathway is amino-acid biosynthesis; L-histidine biosynthesis; L-histidine from 5-phospho-alpha-D-ribose 1-diphosphate: step 5/9. In terms of biological role, IGPS catalyzes the conversion of PRFAR and glutamine to IGP, AICAR and glutamate. The HisF subunit catalyzes the cyclization activity that produces IGP and AICAR from PRFAR using the ammonia provided by the HisH subunit. The chain is Imidazole glycerol phosphate synthase subunit HisF from Thermus thermophilus (strain ATCC 27634 / DSM 579 / HB8).